A 431-amino-acid chain; its full sequence is O-Mevalon transferase macI (431 aa).

N-linked (GlcNAc...) asparagine glycosylation is present at Asn-176. 4 consecutive transmembrane segments (helical) span residues 198 to 218, 301 to 321, 336 to 356, and 404 to 424; these read IYALIVCGFAITIYSHFAILM, LLMMSFVISGLIHACGTYQVT, YFALQGMAIIAEDFGCWVLGI, and LFAALELVRVSAVAVPGNFVA.

It belongs to the wax synthase family.

It localises to the membrane. The protein operates within secondary metabolite biosynthesis; terpenoid biosynthesis. In terms of biological role, O-Mevalon transferase; part of the gene cluster that mediates the biosynthesis of macrophorins, isoprenoid epoxycyclohexenones containing cyclized drimane moieties. The first step of the pathway is the synthesis of 6-methylsalicylic acid (6-MSA) by the polyketide synthase macA. 6-MSA is then converted to m-cresol by the decarboxylase macB. The cytochrome P450 monooxygenase macC then catalyzes the oxidation of m-cresol to toluquinol. Epoxidation of toluquinol is then performed by the short chain dehydrogenase macD, with the help of macE, and a further prenylation by macG leads to 7-deacetoxyyanuthone A. The next step is the hydroxylation of C-22 of 7-deacetoxyyanuthone A by the cytochrome P450 monooxygenase macH to yield 22-deacetylyanuthone A. O-Mevalon transferase macI then attaches mevalon to the hydroxyl group of 22-deacetylyanuthone A to produce yanuthone E. The terpene cyclase macJ catalyzes the cyclization of 22-deacetylyanuthone A to macrophorin A. MacJ is also able to catalyze cyclization of yanuthone E and 7-deacetoxyyanuthone A to their corresponding macrophorins. The macJ products can be further modified by macH and macJ, as well as by the FAD-dependent monooxygenase macF, to produce additional macrophorins, including 4'-oxomacrophorin A, 4'-oxomacrophorin D and 4'-oxomacrophorin E. This Penicillium terrestre protein is O-Mevalon transferase macI.